We begin with the raw amino-acid sequence, 126 residues long: UPF0235 protein C15orf40 homolog (126 aa).

The interval 1–32 is disordered; the sequence is MPKKAGATSKGKNQTKEPETAPPAAGPVATDP. The residue at position 89 (serine 89) is a Phosphoserine.

This sequence belongs to the UPF0235 family.

This chain is UPF0235 protein C15orf40 homolog, found in Mus musculus (Mouse).